A 450-amino-acid chain; its full sequence is ATP-dependent protease ATPase subunit HslU (450 aa).

ATP contacts are provided by residues Val-29, 71 to 76 (GVGKTE), Asp-261, Glu-328, and Arg-400.

This sequence belongs to the ClpX chaperone family. HslU subfamily. A double ring-shaped homohexamer of HslV is capped on each side by a ring-shaped HslU homohexamer. The assembly of the HslU/HslV complex is dependent on binding of ATP.

It is found in the cytoplasm. In terms of biological role, ATPase subunit of a proteasome-like degradation complex; this subunit has chaperone activity. The binding of ATP and its subsequent hydrolysis by HslU are essential for unfolding of protein substrates subsequently hydrolyzed by HslV. HslU recognizes the N-terminal part of its protein substrates and unfolds these before they are guided to HslV for hydrolysis. This is ATP-dependent protease ATPase subunit HslU from Rickettsia felis (strain ATCC VR-1525 / URRWXCal2) (Rickettsia azadi).